A 140-amino-acid polypeptide reads, in one-letter code: uncharacterized protein (140 aa).

2 consecutive transmembrane segments (helical) span residues 4–21 and 26–48; these read ILKIGILGFGAVFGYLFG and LVKVLVCFIVADYISGLLASGYL.

It belongs to the bacteriophage holin family. Cp-1 holin subfamily.

Its subcellular location is the cell membrane. This is an uncharacterized protein from Listeria innocua serovar 6a (strain ATCC BAA-680 / CLIP 11262).